A 322-amino-acid chain; its full sequence is Phosphatidylserine decarboxylase proenzyme (322 aa).

Residues D90, H147, and S254 each act as charge relay system; for autoendoproteolytic cleavage activity in the active site. S254 acts as the Schiff-base intermediate with substrate; via pyruvic acid; for decarboxylase activity in catalysis. The residue at position 254 (S254) is a Pyruvic acid (Ser); by autocatalysis. Positions 297 to 322 (PAPLPAEEIKAEHDASPLVDNKKDDT) are disordered. Positions 303–322 (EEIKAEHDASPLVDNKKDDT) are enriched in basic and acidic residues.

Belongs to the phosphatidylserine decarboxylase family. PSD-B subfamily. Prokaryotic type I sub-subfamily. In terms of assembly, heterodimer of a large membrane-associated beta subunit and a small pyruvoyl-containing alpha subunit. The cofactor is pyruvate. Is synthesized initially as an inactive proenzyme. Formation of the active enzyme involves a self-maturation process in which the active site pyruvoyl group is generated from an internal serine residue via an autocatalytic post-translational modification. Two non-identical subunits are generated from the proenzyme in this reaction, and the pyruvate is formed at the N-terminus of the alpha chain, which is derived from the carboxyl end of the proenzyme. The autoendoproteolytic cleavage occurs by a canonical serine protease mechanism, in which the side chain hydroxyl group of the serine supplies its oxygen atom to form the C-terminus of the beta chain, while the remainder of the serine residue undergoes an oxidative deamination to produce ammonia and the pyruvoyl prosthetic group on the alpha chain. During this reaction, the Ser that is part of the protease active site of the proenzyme becomes the pyruvoyl prosthetic group, which constitutes an essential element of the active site of the mature decarboxylase.

The protein resides in the cell membrane. The enzyme catalyses a 1,2-diacyl-sn-glycero-3-phospho-L-serine + H(+) = a 1,2-diacyl-sn-glycero-3-phosphoethanolamine + CO2. The protein operates within phospholipid metabolism; phosphatidylethanolamine biosynthesis; phosphatidylethanolamine from CDP-diacylglycerol: step 2/2. Functionally, catalyzes the formation of phosphatidylethanolamine (PtdEtn) from phosphatidylserine (PtdSer). This is Phosphatidylserine decarboxylase proenzyme from Salmonella typhi.